The sequence spans 170 residues: Histone H1.9 (170 aa).

Residues 34–108 (RKPTMSYVIL…GASGSLCLCK (75 aa)) form the H15 domain. S56 is modified (phosphoserine). A disordered region spans residues 118–140 (AKRCQDRQKSQKPQKPGQRESEP).

Belongs to the histone H1/H5 family. Expressed exclusively in the testis by haploid germ cells (at protein level).

The protein resides in the nucleus. It is found in the chromosome. Functionally, DNA-binding protein that may be implicated in chromatin remodeling and/or transcriptional regulation during spermiogenesis, the process of spermatid maturation into spermatozoa. The polypeptide is Histone H1.9 (Mus musculus (Mouse)).